The chain runs to 392 residues: Pannexin-3 (392 aa).

The Cytoplasmic segment spans residues 1 to 39 (MSLAHTAAEYMLSDALLPDRRGSRLKGLRLELPLDKMVK). Residues 40–60 (FITVGFPLLLMSLAFAQEFSS) form a helical membrane-spanning segment. At 61–113 (GSPISCFSPSNFSVRQAAYVDSSCWDSLAHHTQDKAGQYKVKSLWPHKALPYS) the chain is on the extracellular side. The N-linked (GlcNAc...) asparagine glycan is linked to asparagine 71. A helical transmembrane segment spans residues 114-134 (LLALAVAMYLPVLLWQYVAVP). Residues 135–215 (SLSSDLLFII…VATYLLRNAL (81 aa)) lie on the Cytoplasmic side of the membrane. The chain crosses the membrane as a helical span at residues 216 to 236 (LLLFTSATYLYLGQFHLDVFF). Residues 237–267 (QDEFNCFIKTGLLHDETHVPELITCRLTSLS) are Extracellular-facing. The chain crosses the membrane as a helical span at residues 268–288 (VFQIVSVSSAAIYTILVPVII). At 289-392 (YNLTRLCRWD…LTQHTYDEHA (104 aa)) the chain is on the cytoplasmic side.

It belongs to the pannexin family. In terms of assembly, homoheptameric. In terms of processing, N-glycosylation may play a role in cell surface targeting. Expressed in skin, cartilage, heart, lung, liver, spleen, thymus and kidney. Not expressed in brain. Expressed in calvarial cells.

The protein localises to the cell membrane. Its subcellular location is the endoplasmic reticulum membrane. The catalysed reaction is Ca(2+)(in) = Ca(2+)(out). It carries out the reaction ATP(in) = ATP(out). Its function is as follows. Regulator of osteoblast differentiation by functionning as a Ca(2+) channel in the endoplasmic reticulum which regulates calmodulin (CaM) pathways. Allows ATP release into the extracellular space and activation or purinergic receptors. The sequence is that of Pannexin-3 (Panx3) from Mus musculus (Mouse).